The chain runs to 1060 residues: Carbamoyl phosphate synthase large chain (1060 aa).

The carboxyphosphate synthetic domain stretch occupies residues 1–401; it reads MPKRTDIRKI…SLLKAVRSLE (401 aa). ATP is bound by residues Arg-129, Arg-169, Gly-175, Gly-176, Gln-208, Ile-210, Glu-215, Gly-241, Ile-242, His-243, Gln-284, and Glu-298. Positions 133–327 constitute an ATP-grasp 1 domain; that stretch reads KNLMNQLNEP…IAKMAAKIAV (195 aa). Mg(2+) is bound by residues Gln-284, Glu-298, and Asn-300. 3 residues coordinate Mn(2+): Gln-284, Glu-298, and Asn-300. The tract at residues 402–546 is oligomerization domain; the sequence is IGTAHLELDG…YTTYEQENES (145 aa). The carbamoyl phosphate synthetic domain stretch occupies residues 547-929; it reads LVSAKPSILV…ALYKAFEASG (383 aa). Positions 671-861 constitute an ATP-grasp 2 domain; it reads DQLIQELNIP…MAQLATQLIL (191 aa). The ATP site is built by Arg-707, Arg-746, Leu-748, Glu-752, Gly-777, Val-778, His-779, Ser-780, Gln-820, and Glu-832. Mg(2+) is bound by residues Gln-820, Glu-832, and Asn-834. Residues Gln-820, Glu-832, and Asn-834 each contribute to the Mn(2+) site. Residues 930-1060 enclose the MGS-like domain; the sequence is MHLPSHGNVL…ESQSLLTKPL (131 aa). The segment at 930-1060 is allosteric domain; the sequence is MHLPSHGNVL…ESQSLLTKPL (131 aa).

It belongs to the CarB family. Composed of two chains; the small (or glutamine) chain promotes the hydrolysis of glutamine to ammonia, which is used by the large (or ammonia) chain to synthesize carbamoyl phosphate. Tetramer of heterodimers (alpha,beta)4. The cofactor is Mg(2+). It depends on Mn(2+) as a cofactor.

The catalysed reaction is hydrogencarbonate + L-glutamine + 2 ATP + H2O = carbamoyl phosphate + L-glutamate + 2 ADP + phosphate + 2 H(+). It carries out the reaction hydrogencarbonate + NH4(+) + 2 ATP = carbamoyl phosphate + 2 ADP + phosphate + 2 H(+). It participates in amino-acid biosynthesis; L-arginine biosynthesis; carbamoyl phosphate from bicarbonate: step 1/1. Its pathway is pyrimidine metabolism; UMP biosynthesis via de novo pathway; (S)-dihydroorotate from bicarbonate: step 1/3. In terms of biological role, large subunit of the glutamine-dependent carbamoyl phosphate synthetase (CPSase). CPSase catalyzes the formation of carbamoyl phosphate from the ammonia moiety of glutamine, carbonate, and phosphate donated by ATP, constituting the first step of 2 biosynthetic pathways, one leading to arginine and/or urea and the other to pyrimidine nucleotides. The large subunit (synthetase) binds the substrates ammonia (free or transferred from glutamine from the small subunit), hydrogencarbonate and ATP and carries out an ATP-coupled ligase reaction, activating hydrogencarbonate by forming carboxy phosphate which reacts with ammonia to form carbamoyl phosphate. This is Carbamoyl phosphate synthase large chain from Latilactobacillus sakei subsp. sakei (strain 23K) (Lactobacillus sakei subsp. sakei).